Consider the following 210-residue polypeptide: Imidazole glycerol phosphate synthase subunit HisH (210 aa).

One can recognise a Glutamine amidotransferase type-1 domain in the interval 3 to 210; it reads TIAIIDYGMG…ILKNFALSKA (208 aa). C81 (nucleophile) is an active-site residue. Catalysis depends on residues H190 and E192.

As to quaternary structure, heterodimer of HisH and HisF.

It is found in the cytoplasm. The catalysed reaction is 5-[(5-phospho-1-deoxy-D-ribulos-1-ylimino)methylamino]-1-(5-phospho-beta-D-ribosyl)imidazole-4-carboxamide + L-glutamine = D-erythro-1-(imidazol-4-yl)glycerol 3-phosphate + 5-amino-1-(5-phospho-beta-D-ribosyl)imidazole-4-carboxamide + L-glutamate + H(+). It carries out the reaction L-glutamine + H2O = L-glutamate + NH4(+). The protein operates within amino-acid biosynthesis; L-histidine biosynthesis; L-histidine from 5-phospho-alpha-D-ribose 1-diphosphate: step 5/9. In terms of biological role, IGPS catalyzes the conversion of PRFAR and glutamine to IGP, AICAR and glutamate. The HisH subunit catalyzes the hydrolysis of glutamine to glutamate and ammonia as part of the synthesis of IGP and AICAR. The resulting ammonia molecule is channeled to the active site of HisF. This is Imidazole glycerol phosphate synthase subunit HisH from Geobacter metallireducens (strain ATCC 53774 / DSM 7210 / GS-15).